A 390-amino-acid polypeptide reads, in one-letter code: 3-ketoacyl-CoA thiolase (390 aa).

Cys95 (acyl-thioester intermediate) is an active-site residue. Catalysis depends on proton acceptor residues His346 and Cys376.

This sequence belongs to the thiolase-like superfamily. Thiolase family. In terms of assembly, heterotetramer of two alpha chains (FadB) and two beta chains (FadA).

The protein localises to the cytoplasm. It carries out the reaction an acyl-CoA + acetyl-CoA = a 3-oxoacyl-CoA + CoA. It functions in the pathway lipid metabolism; fatty acid beta-oxidation. In terms of biological role, catalyzes the final step of fatty acid oxidation in which acetyl-CoA is released and the CoA ester of a fatty acid two carbons shorter is formed. This chain is 3-ketoacyl-CoA thiolase, found in Psychrobacter arcticus (strain DSM 17307 / VKM B-2377 / 273-4).